The chain runs to 682 residues: Serine/threonine-protein kinase PAK 6 (682 aa).

Disordered stretches follow at residues 1–30 (MFRKKKKKRPEISAPQNFQHRVHTSFDPKE), 132–170 (SPQSEHTDPHGLYLSCNGGTPAGHRQVPWPEPQSPQALP), 200–256 (LQSS…QESS), and 270–367 (PATG…NLYL). The CRIB domain maps to 12 to 25 (ISAPQNFQHRVHTS). The segment at 26–407 (FDPKEGKFVG…VVDQGDPRLL (382 aa)) is linker. Composition is skewed to polar residues over residues 270–279 (PATGAASSSK) and 297–334 (KDSSSNLVAKAQSLPSEQPMGTFSPLTTSDTSSPQKSL). The Protein kinase domain maps to 408–659 (LDSYVKIGEG…AQELLDHPFL (252 aa)). ATP is bound by residues 414–422 (IGEGSTGIV) and K437. The active-site Proton acceptor is the D527. Phosphoserine; by autocatalysis is present on S561.

This sequence belongs to the protein kinase superfamily. STE Ser/Thr protein kinase family. STE20 subfamily. Interacts tightly with GTP-bound but not GDP-bound CDC42/p21 and RAC1. Interacts with the androgen receptor AR. Interacts with IQGAP1 and PPM1B. Post-translationally, autophosphorylated. Phosphorylated by MAP2K6/MAPKK6, leading to PAK6 activation.

The protein localises to the cytoplasm. Its subcellular location is the nucleus. It carries out the reaction L-seryl-[protein] + ATP = O-phospho-L-seryl-[protein] + ADP + H(+). The enzyme catalyses L-threonyl-[protein] + ATP = O-phospho-L-threonyl-[protein] + ADP + H(+). In terms of biological role, serine/threonine protein kinase that plays a role in the regulation of gene transcription. The kinase activity is induced by various effectors including AR or MAP2K6/MAPKK6. Phosphorylates the DNA-binding domain of androgen receptor/AR and thereby inhibits AR-mediated transcription. Also inhibits ESR1-mediated transcription. May play a role in cytoskeleton regulation by interacting with IQGAP1. May protect cells from apoptosis through phosphorylation of BAD. This Mus musculus (Mouse) protein is Serine/threonine-protein kinase PAK 6 (Pak6).